The primary structure comprises 100 residues: Urease subunit gamma (100 aa).

It belongs to the urease gamma subunit family. Heterotrimer of UreA (gamma), UreB (beta) and UreC (alpha) subunits. Three heterotrimers associate to form the active enzyme.

It is found in the cytoplasm. It carries out the reaction urea + 2 H2O + H(+) = hydrogencarbonate + 2 NH4(+). The protein operates within nitrogen metabolism; urea degradation; CO(2) and NH(3) from urea (urease route): step 1/1. The protein is Urease subunit gamma of Rhodopseudomonas palustris (strain BisB18).